A 427-amino-acid chain; its full sequence is Kynureninase (427 aa).

Pyridoxal 5'-phosphate contacts are provided by residues T104, T105, 132–135, D213, H216, and Y238; that span reads FPSD. An N6-(pyridoxal phosphate)lysine modification is found at K239. Pyridoxal 5'-phosphate contacts are provided by W267 and T295.

This sequence belongs to the kynureninase family. Homodimer. Pyridoxal 5'-phosphate is required as a cofactor.

It carries out the reaction L-kynurenine + H2O = anthranilate + L-alanine + H(+). It catalyses the reaction 3-hydroxy-L-kynurenine + H2O = 3-hydroxyanthranilate + L-alanine + H(+). The protein operates within amino-acid degradation; L-kynurenine degradation; L-alanine and anthranilate from L-kynurenine: step 1/1. It participates in cofactor biosynthesis; NAD(+) biosynthesis; quinolinate from L-kynurenine: step 2/3. Its function is as follows. Catalyzes the cleavage of L-kynurenine (L-Kyn) and L-3-hydroxykynurenine (L-3OHKyn) into anthranilic acid (AA) and 3-hydroxyanthranilic acid (3-OHAA), respectively. The sequence is that of Kynureninase from Shouchella clausii (strain KSM-K16) (Alkalihalobacillus clausii).